A 367-amino-acid polypeptide reads, in one-letter code: 3-dehydroquinate synthase (367 aa).

Residues 99 to 103, 123 to 124, Lys136, Lys145, and 163 to 166 contribute to the NAD(+) site; these read GVVGD, TT, and FLRT. Zn(2+) contacts are provided by Glu178, His242, and His259.

Belongs to the sugar phosphate cyclases superfamily. Dehydroquinate synthase family. Co(2+) is required as a cofactor. Requires Zn(2+) as cofactor. The cofactor is NAD(+).

The protein resides in the cytoplasm. The enzyme catalyses 7-phospho-2-dehydro-3-deoxy-D-arabino-heptonate = 3-dehydroquinate + phosphate. It participates in metabolic intermediate biosynthesis; chorismate biosynthesis; chorismate from D-erythrose 4-phosphate and phosphoenolpyruvate: step 2/7. Its function is as follows. Catalyzes the conversion of 3-deoxy-D-arabino-heptulosonate 7-phosphate (DAHP) to dehydroquinate (DHQ). In Chlorobaculum parvum (strain DSM 263 / NCIMB 8327) (Chlorobium vibrioforme subsp. thiosulfatophilum), this protein is 3-dehydroquinate synthase.